Reading from the N-terminus, the 497-residue chain is Cytochrome P450 98A8 (497 aa).

A helical membrane pass occupies residues Ile-2 to Tyr-19. Residue Cys-431 participates in heme binding.

The protein belongs to the cytochrome P450 family. Heme is required as a cofactor. Strongly expressed in inflorescence tips, young flower buds, seeds, stamen, tapetum and pollen.

The protein resides in the membrane. In terms of biological role, acts redundantly with CYP98A9 as tricoumaroylspermidine meta-hydroxylase. Also catalyzes the meta-hydroxylation of the three triferuloylspermidine phenolic rings. Unable to use 5-O-(4-coumaroyl) D-quinate or 5-O-(4-coumaroyl) shikimate as substrates. The polypeptide is Cytochrome P450 98A8 (CYP98A8) (Arabidopsis thaliana (Mouse-ear cress)).